We begin with the raw amino-acid sequence, 297 residues long: N-acetylneuraminate lyase (297 aa).

Aceneuramate is bound by residues serine 47 and threonine 48. Residue tyrosine 137 is the Proton donor of the active site. Catalysis depends on lysine 165, which acts as the Schiff-base intermediate with substrate. Residues threonine 167, glycine 189, aspartate 191, glutamate 192, and serine 208 each contribute to the aceneuramate site.

It belongs to the DapA family. NanA subfamily. In terms of assembly, homotetramer.

It localises to the cytoplasm. The catalysed reaction is aceneuramate = aldehydo-N-acetyl-D-mannosamine + pyruvate. Its pathway is amino-sugar metabolism; N-acetylneuraminate degradation; D-fructose 6-phosphate from N-acetylneuraminate: step 1/5. In terms of biological role, catalyzes the reversible aldol cleavage of N-acetylneuraminic acid (sialic acid; Neu5Ac) to form pyruvate and N-acetylmannosamine (ManNAc) via a Schiff base intermediate. In Salmonella agona (strain SL483), this protein is N-acetylneuraminate lyase.